The sequence spans 211 residues: Arginine exporter protein ArgO (211 aa).

6 consecutive transmembrane segments (helical) span residues 1 to 21 (MISY…PLGP), 37 to 57 (LMIA…GIFG), 68 to 88 (LLAL…FGAL), 111 to 131 (IIAT…DTFV), 147 to 167 (WFAL…ALLA), and 179 to 199 (AQRI…FQLA).

Belongs to the LysE/ArgO transporter (TC 2.A.75) family.

It localises to the cell inner membrane. The enzyme catalyses L-arginine(in) = L-arginine(out). Its function is as follows. Involved in the export of arginine. Important to control the intracellular level of arginine and the correct balance between arginine and lysine. The sequence is that of Arginine exporter protein ArgO from Salmonella typhimurium (strain LT2 / SGSC1412 / ATCC 700720).